We begin with the raw amino-acid sequence, 256 residues long: Putative F-box protein At3g51171 (256 aa).

In terms of domain architecture, F-box spans 1–44 (MVPLPWELEEDILSRLAAQSLVRFRSVCKRWNYLFDEKSFIKNH).

The protein is Putative F-box protein At3g51171 of Arabidopsis thaliana (Mouse-ear cress).